A 1378-amino-acid chain; its full sequence is DNA-directed RNA polymerase subunit beta (1378 aa).

The protein belongs to the RNA polymerase beta chain family. As to quaternary structure, the RNAP catalytic core consists of 2 alpha, 1 beta, 1 beta' and 1 omega subunit. When a sigma factor is associated with the core the holoenzyme is formed, which can initiate transcription.

It catalyses the reaction RNA(n) + a ribonucleoside 5'-triphosphate = RNA(n+1) + diphosphate. In terms of biological role, DNA-dependent RNA polymerase catalyzes the transcription of DNA into RNA using the four ribonucleoside triphosphates as substrates. The sequence is that of DNA-directed RNA polymerase subunit beta from Mesorhizobium japonicum (strain LMG 29417 / CECT 9101 / MAFF 303099) (Mesorhizobium loti (strain MAFF 303099)).